A 101-amino-acid polypeptide reads, in one-letter code: NADH-quinone oxidoreductase subunit K (101 aa).

3 helical membrane passes run 4 to 24 (LTHY…GIFM), 30 to 50 (LVLL…FIAF), and 61 to 81 (IFVF…LAIM).

It belongs to the complex I subunit 4L family. In terms of assembly, NDH-1 is composed of 14 different subunits. Subunits NuoA, H, J, K, L, M, N constitute the membrane sector of the complex.

It localises to the cell inner membrane. The catalysed reaction is a quinone + NADH + 5 H(+)(in) = a quinol + NAD(+) + 4 H(+)(out). Its function is as follows. NDH-1 shuttles electrons from NADH, via FMN and iron-sulfur (Fe-S) centers, to quinones in the respiratory chain. The immediate electron acceptor for the enzyme in this species is believed to be ubiquinone. Couples the redox reaction to proton translocation (for every two electrons transferred, four hydrogen ions are translocated across the cytoplasmic membrane), and thus conserves the redox energy in a proton gradient. The chain is NADH-quinone oxidoreductase subunit K from Neisseria meningitidis serogroup B (strain ATCC BAA-335 / MC58).